Here is a 264-residue protein sequence, read N- to C-terminus: S-methyl-5'-thioadenosine phosphorylase (264 aa).

Phosphate contacts are provided by residues serine 14 and 55–56 (RH). A substrate-binding site is contributed by methionine 180. A phosphate-binding site is contributed by threonine 181. Residue 204–206 (DVD) participates in substrate binding.

This sequence belongs to the PNP/MTAP phosphorylase family. MTAP subfamily. In terms of assembly, homodimer.

It catalyses the reaction S-methyl-5'-thioadenosine + phosphate = 5-(methylsulfanyl)-alpha-D-ribose 1-phosphate + adenine. It functions in the pathway amino-acid biosynthesis; L-methionine biosynthesis via salvage pathway; S-methyl-5-thio-alpha-D-ribose 1-phosphate from S-methyl-5'-thioadenosine (phosphorylase route): step 1/1. With respect to regulation, not inhibited by adenosine, potently inhibited by MT-DADMe-immucillin A. Its function is as follows. Catalyzes the reversible phosphorylation of S-methyl-5'-thioadenosine (MTA) to adenine and 5-methylthioribose-1-phosphate. Involved in the breakdown of MTA, a major by-product of polyamine biosynthesis. Responsible for the first step in the methionine salvage pathway after MTA has been generated from S-adenosylmethionine. Prefers MTA, with 2% activity on adenosine, 0.8% activity on S-adenosyl-L-homocysteine and no activity on other tested nucleosides. The protein is S-methyl-5'-thioadenosine phosphorylase of Mycobacterium tuberculosis (strain ATCC 25618 / H37Rv).